We begin with the raw amino-acid sequence, 126 residues long: Hydrogenase maturation factor HypA (126 aa).

His-2 provides a ligand contact to Ni(2+). Residues Cys-78, Cys-81, Cys-97, and Cys-100 each contribute to the Zn(2+) site.

This sequence belongs to the HypA/HybF family.

Involved in the maturation of [NiFe] hydrogenases. Required for nickel insertion into the metal center of the hydrogenase. The chain is Hydrogenase maturation factor HypA from Methanococcus maripaludis (strain DSM 14266 / JCM 13030 / NBRC 101832 / S2 / LL).